A 397-amino-acid chain; its full sequence is L-cysteine desulfidase (397 aa).

The active-site Proton acceptor is the Cys23. Cys288, Cys330, and Cys337 together coordinate [4Fe-4S] cluster.

It belongs to the L-cysteine desulfidase family. As to quaternary structure, homotrimer. [4Fe-4S] cluster is required as a cofactor.

The enzyme catalyses L-cysteine + H2O = hydrogen sulfide + pyruvate + NH4(+) + H(+). In terms of biological role, catalyzes the cleavage of L-cysteine to form 2-aminoprop-2-enoate and sulfide. The former then spontaneously hydrolyzes to pyruvate and NH(3). May be responsible for the production of sulfide required for the biosynthesis of iron-sulfur centers in this archaea. The polypeptide is L-cysteine desulfidase (Methanococcus maripaludis (strain C7 / ATCC BAA-1331)).